Here is a 345-residue protein sequence, read N- to C-terminus: Eukaryotic translation initiation factor 3 subunit F (345 aa).

Residues 30–166 (VVIQPQAIFS…TRAYISAPVG (137 aa)) enclose the MPN domain. The interval 310 to 345 (EGASAEAGAQRGQRGGKGGRGGQQRTQERASEEVRA) is disordered. Residues 312 to 321 (ASAEAGAQRG) are compositionally biased toward low complexity. Positions 322–331 (QRGGKGGRGG) are enriched in gly residues. Residues 335–345 (TQERASEEVRA) are compositionally biased toward basic and acidic residues.

The protein belongs to the eIF-3 subunit F family. As to quaternary structure, component of the eukaryotic translation initiation factor 3 (eIF-3) complex.

The protein resides in the cytoplasm. Its function is as follows. Component of the eukaryotic translation initiation factor 3 (eIF-3) complex, which is involved in protein synthesis of a specialized repertoire of mRNAs and, together with other initiation factors, stimulates binding of mRNA and methionyl-tRNAi to the 40S ribosome. The eIF-3 complex specifically targets and initiates translation of a subset of mRNAs involved in cell proliferation. This is Eukaryotic translation initiation factor 3 subunit F from Aspergillus fumigatus (strain CBS 144.89 / FGSC A1163 / CEA10) (Neosartorya fumigata).